The following is a 428-amino-acid chain: Histone deacetylase 3 (428 aa).

The tract at residues 3-316 (NRTSYFYDPD…WTFETSLLLE (314 aa)) is histone deacetylase. The 1D-myo-inositol 1,4,5,6-tetrakisphosphate site is built by His17, Gly21, and Lys25. His135 is a catalytic residue. Zn(2+) is bound by residues Asp170, His172, and Asp259. Arg265 contacts 1D-myo-inositol 1,4,5,6-tetrakisphosphate. Residues 385-428 (LNYERNDEPDPDERGAEENYTRPEAANEFYDGDHDNDKESDVEI) are disordered. Composition is skewed to basic and acidic residues over residues 386 to 405 (NYER…ENYT) and 415 to 428 (DGDH…DVEI).

It belongs to the histone deacetylase family. HD type 1 subfamily.

It is found in the nucleus. The protein localises to the chromosome. Its subcellular location is the cytoplasm. The protein resides in the cytosol. The enzyme catalyses N(6)-acetyl-L-lysyl-[histone] + H2O = L-lysyl-[histone] + acetate. Its activity is regulated as follows. Inositol tetraphosphate (1D-myo-inositol 1,4,5,6-tetrakisphosphate) promotes the histone deacetylase activity by acting as an intermolecular glue between hdac3 and N-Cor repressor complex components. Responsible for the deacetylation of lysine residues on the N-terminal part of the core histones (H2A, H2B, H3 and H4). Histone deacetylation gives a tag for epigenetic repression and plays an important role in transcriptional regulation, cell cycle progression and developmental events. Histone deacetylases act via the formation of large multiprotein complexes, such as N-Cor repressor complex, which activate the histone deacetylase activity. May play a role in the regulation of the circadian clock in a deacetylase activity-independent manner. In Tetraodon nigroviridis (Spotted green pufferfish), this protein is Histone deacetylase 3 (hdac3).